Here is a 707-residue protein sequence, read N- to C-terminus: Ribosomal RNA large subunit methyltransferase K/L (707 aa).

Residues 44 to 155 enclose the THUMP domain; the sequence is VIYNLCLWSR…NDILTVSFDL (112 aa).

The protein belongs to the methyltransferase superfamily. RlmKL family.

The protein resides in the cytoplasm. It carries out the reaction guanosine(2445) in 23S rRNA + S-adenosyl-L-methionine = N(2)-methylguanosine(2445) in 23S rRNA + S-adenosyl-L-homocysteine + H(+). The enzyme catalyses guanosine(2069) in 23S rRNA + S-adenosyl-L-methionine = N(2)-methylguanosine(2069) in 23S rRNA + S-adenosyl-L-homocysteine + H(+). In terms of biological role, specifically methylates the guanine in position 2445 (m2G2445) and the guanine in position 2069 (m7G2069) of 23S rRNA. The chain is Ribosomal RNA large subunit methyltransferase K/L from Legionella pneumophila (strain Paris).